Here is an 87-residue protein sequence, read N- to C-terminus: U9-ctenitoxin-Pn1a (87 aa).

A signal peptide spans 1–22 (MWLKTQLFVLAIAVIALLEVHA). A propeptide spanning residues 23–37 (EPESNDNNELVVEEA) is cleaved from the precursor. 4 disulfides stabilise this stretch: Cys40–Cys54, Cys47–Cys64, Cys53–Cys73, and Cys66–Cys71. The propeptide occupies 75 to 87 (KSLREMAAAAFGR).

This sequence belongs to the neurotoxin 02 (plectoxin) family. 01 (Tx3) subfamily. Expressed by the venom gland.

The protein localises to the secreted. Antagonist of L-type calcium channels (Cav1/CACNA1). The sequence is that of U9-ctenitoxin-Pn1a from Phoneutria nigriventer (Brazilian armed spider).